The chain runs to 711 residues: Polyribonucleotide nucleotidyltransferase (711 aa).

Mg(2+) contacts are provided by aspartate 490 and aspartate 496. One can recognise a KH domain in the interval proline 556–isoleucine 615. The 69-residue stretch at glycine 625–lysine 693 folds into the S1 motif domain.

The protein belongs to the polyribonucleotide nucleotidyltransferase family. Mg(2+) serves as cofactor.

The protein resides in the cytoplasm. It carries out the reaction RNA(n+1) + phosphate = RNA(n) + a ribonucleoside 5'-diphosphate. Its function is as follows. Involved in mRNA degradation. Catalyzes the phosphorolysis of single-stranded polyribonucleotides processively in the 3'- to 5'-direction. The chain is Polyribonucleotide nucleotidyltransferase from Ruegeria sp. (strain TM1040) (Silicibacter sp.).